The sequence spans 125 residues: Large ribosomal subunit protein bL12 (125 aa).

The protein belongs to the bacterial ribosomal protein bL12 family. As to quaternary structure, homodimer. Part of the ribosomal stalk of the 50S ribosomal subunit. Forms a multimeric L10(L12)X complex, where L10 forms an elongated spine to which 2 to 4 L12 dimers bind in a sequential fashion. Binds GTP-bound translation factors.

In terms of biological role, forms part of the ribosomal stalk which helps the ribosome interact with GTP-bound translation factors. Is thus essential for accurate translation. The polypeptide is Large ribosomal subunit protein bL12 (Variovorax paradoxus (strain S110)).